The following is a 578-amino-acid chain: uncharacterized protein (578 aa).

This is an uncharacterized protein from Eikenella corrodens.